Reading from the N-terminus, the 459-residue chain is Protein king tubby (459 aa).

The segment at 114 to 205 (HELEDEESSP…SNGAGGESEG (92 aa)) is disordered. Positions 123 to 155 (PVTVIEQQQTAPHSANSTHSQRPSTTRQPSFND) are enriched in polar residues. Position 152 is a phosphoserine (Ser-152).

The protein belongs to the TUB family.

It localises to the cytoplasm. The protein localises to the nucleus. Its subcellular location is the cell projection. It is found in the cilium membrane. The protein resides in the rhabdomere. In Drosophila persimilis (Fruit fly), this protein is Protein king tubby.